Reading from the N-terminus, the 309-residue chain is Clotting factor G beta subunit (309 aa).

Residues 1–31 form the signal peptide; that stretch reads MDISFLVFITLSMALFSSNVTGTSVTSRVRR. Cystine bridges form between Cys38-Cys158, Cys74-Cys90, Cys205-Cys227, and Cys238-Cys268. One can recognise a Peptidase S1 domain in the interval 47–292; it reads IIGGGIATPH…YVNWLQEITF (246 aa). His89 acts as the Charge relay system in catalysis. The N-linked (GlcNAc...) asparagine glycan is linked to Asn100. Residue Asp138 is the Charge relay system of the active site. The N-linked (GlcNAc...) asparagine glycan is linked to Asn206. Ser242 functions as the Charge relay system in the catalytic mechanism.

It belongs to the peptidase S1 family. As to quaternary structure, clotting factor G is a heterodimer composed of two non-covalently associated subunits, alpha and beta. Upon activation, converted to a two-chain active form linked by a disulfide bond. Forms a covalent heterodimer with intracellular coagulation inhibitor 3/LICI-3. Expressed in the hemocytes (at protein level).

It catalyses the reaction Selective cleavage of 98-Arg-|-Ile-99 bond in Limulus proclotting enzyme to form active clotting enzyme.. Binding to (1-&gt;3)-beta-D-glucan to alpha subunit, induces autocatalysis and activation of beta subunit. Inhibited by intracellular coagulation inhibitor 3/LICI-3 and to a lesser extend by intracellular coagulation inhibitor 2/LICI-2. Its function is as follows. Component of the heterodimer clotting factor G which may play a role in defense mechanisms against fungi. Initiates a (1-&gt;3)-beta-glucan-sensing clotting pathway whereby the alpha subunit binds to glucans containing (1-&gt;3)-beta linkages, which are components of the fungal cell wall, and the beta subunit catalyzes the activation of proclotting enzyme. The chain is Clotting factor G beta subunit from Tachypleus tridentatus (Japanese horseshoe crab).